The primary structure comprises 520 residues: GMP synthase [glutamine-hydrolyzing] (520 aa).

The region spanning 9–202 is the Glutamine amidotransferase type-1 domain; the sequence is KILILDFGSQ…VRQICGCTGQ (194 aa). Cys86 acts as the Nucleophile in catalysis. Catalysis depends on residues His176 and Glu178. The GMPS ATP-PPase domain occupies 203–395; sequence WTPGQIIEDA…LGLPHPMVYR (193 aa). Residue 230–236 coordinates ATP; it reads SGGVDSS.

In terms of assembly, homodimer.

It carries out the reaction XMP + L-glutamine + ATP + H2O = GMP + L-glutamate + AMP + diphosphate + 2 H(+). The protein operates within purine metabolism; GMP biosynthesis; GMP from XMP (L-Gln route): step 1/1. In terms of biological role, catalyzes the synthesis of GMP from XMP. The chain is GMP synthase [glutamine-hydrolyzing] from Syntrophotalea carbinolica (strain DSM 2380 / NBRC 103641 / GraBd1) (Pelobacter carbinolicus).